The following is a 377-amino-acid chain: UDP-N-acetylglucosamine--N-acetylmuramyl-(pentapeptide) pyrophosphoryl-undecaprenol N-acetylglucosamine transferase (377 aa).

UDP-N-acetyl-alpha-D-glucosamine-binding positions include 11–13 (TGG), N123, R164, S194, and Q295.

The protein belongs to the glycosyltransferase 28 family. MurG subfamily.

The protein localises to the cell inner membrane. The catalysed reaction is di-trans,octa-cis-undecaprenyl diphospho-N-acetyl-alpha-D-muramoyl-L-alanyl-D-glutamyl-meso-2,6-diaminopimeloyl-D-alanyl-D-alanine + UDP-N-acetyl-alpha-D-glucosamine = di-trans,octa-cis-undecaprenyl diphospho-[N-acetyl-alpha-D-glucosaminyl-(1-&gt;4)]-N-acetyl-alpha-D-muramoyl-L-alanyl-D-glutamyl-meso-2,6-diaminopimeloyl-D-alanyl-D-alanine + UDP + H(+). Its pathway is cell wall biogenesis; peptidoglycan biosynthesis. Functionally, cell wall formation. Catalyzes the transfer of a GlcNAc subunit on undecaprenyl-pyrophosphoryl-MurNAc-pentapeptide (lipid intermediate I) to form undecaprenyl-pyrophosphoryl-MurNAc-(pentapeptide)GlcNAc (lipid intermediate II). The sequence is that of UDP-N-acetylglucosamine--N-acetylmuramyl-(pentapeptide) pyrophosphoryl-undecaprenol N-acetylglucosamine transferase from Opitutus terrae (strain DSM 11246 / JCM 15787 / PB90-1).